Reading from the N-terminus, the 163-residue chain is ADP-ribosylation factor-like protein 2-binding protein (163 aa).

Belongs to the ARL2BP family. Found in a complex with ARL2BP, ARL2 and SLC25A6. Found in a complex with ARL2, ARL2BP and SLC25A4. Interacts with STAT2, STAT3 and STAT4. Interacts with GTP-bound ARL2 and ARL3; the complex ARL2-ARL2BP as well as ARL2BP alone, binds to SLC25A4. Interaction with ARL2 may be required for targeting to cilia basal body. Interacts with STAT3; interaction is enhanced with ARL2. Expressed in retina pigment epithelial cells (at protein level). Widely expressed.

It is found in the cytoplasm. The protein resides in the mitochondrion intermembrane space. Its subcellular location is the cytoskeleton. It localises to the microtubule organizing center. The protein localises to the centrosome. It is found in the nucleus. The protein resides in the spindle. Its subcellular location is the cilium basal body. Together with ARL2, plays a role in the nuclear translocation, retention and transcriptional activity of STAT3. May play a role as an effector of ARL2. The chain is ADP-ribosylation factor-like protein 2-binding protein (ARL2BP) from Homo sapiens (Human).